Here is a 1226-residue protein sequence, read N- to C-terminus: MTGAPWYHRDISRVRAEELLAHAGIDGSFLVRDSESVPGAYALCLLFQRHVHTYRILPDADGLLAVQATQGVQVNCFRTLGDLVLGYQNPNKGLVAPLLYPVMRESEANDESSDGDDEKPGSTFANSPPRAISPTATSPPSSSAAPHLLLQRLQELSPNSVGCEIVSLLDEYLHGNVCKDLENLKGGASGLQHFQGILSHICDSLHSEIDQTLSSLETLAKVFDHPSGHLTFSTMQNIGKSPEENMDNLLQKLTTLCNLLSSLEKRVLKALQEAVANHNLSLQPATPPESSRAPKKLARPNPVHSFQVKVVRYGRQTVSVDINEGVLLFDKKSGSFGVETVTLDRIVQLVKFQRGPAKLKMVVDSHHNPPRELVFESTKKREAFCRLLQLMKTTHSQKSELDVISVFVGTWNMGGTPPPGSLQSWVTCSGLGLTPDESISSLPHDIYAVGTQDNPQGEREWAEHIRATLRTSTNIDYKQVAVQSLWNIRLAVFVKPEHEARISQVNTASVKTGLGNTLGNKGAVGVSLLFNGTSMGFVNCHLTSGSDKALRRNHNFQDILRLLSLGEKQLSTFDISLRFNHLFWCGDLNYRLDLDALDILKHVSKREFEELMCADQLTRERHKRKAFFNFKEEKIMFPPTYRYERGSRDCYLWQKYKSSGVQVNGPSWCDRVLWKSYPESHVICTSYGCTDDIFTSEHSPVFATFEVGVISLFPRTESCSERASIELEAIEAIVKTSSKAKFFIEFHSRCLEEPRRSAENDSQYCEVPGFLKLGWSSKQLPKLHPVFSDLEHLRDQHLLLSVKSCDGFESYGECCVALRPTAGKLLDTFETCLTHRGEEMGSIRGRFRVYVPPDRRRIRERVYEWLSIEKDEREMMKDQLSPPSSSAFSIKAPSASYVASPNSYTNPAYFIFEEMPVFRKAEEIPSTIKESQVVCANNTVIQLPRVTGSHGHGKRSARRSDFTEIEIPGSLAPYKPSCETQSELSSAASSYQLFPGPHVPSTSPNQRHTTHSSNSSLQLQSHKNNMAPDSELSGKKLTNSYMNHSVFSRDMHKEKVRQDYQGVHQGRPVPIRNGPKLYPYVSTRVPAQCSASWIVEQPTPASGDNSLTALQIAKSLSEVDFQPADKKYPFHQMPSQQRQHGYDYGLASERNYSWEKEVSVLHGAPETVRELLSTLGLQRYTLDLSRSGWDDLDYFSGITEEELCAAGVSNPSHRRRILENLPKIWD.

Positions 6-102 (WYHRDISRVR…GLVAPLLYPV (97 aa)) constitute an SH2 domain. Residues 106–144 (SEANDESSDGDDEKPGSTFANSPPRAISPTATSPPSSSA) form a disordered region. Acidic residues predominate over residues 108-117 (ANDESSDGDD). Residues 127–144 (SPPRAISPTATSPPSSSA) show a composition bias toward low complexity. An NPXY motif motif is present at residues 906–909 (NPAY). The residue at position 909 (Y909) is a Phosphotyrosine. Disordered stretches follow at residues 945 to 964 (RVTG…DFTE) and 985 to 1035 (SSAA…LSGK). Low complexity predominate over residues 1011–1025 (HSSNSSLQLQSHKNN). The SAM domain occupies 1163-1226 (GAPETVRELL…ILENLPKIWD (64 aa)).

The protein belongs to the inositol 1,4,5-trisphosphate 5-phosphatase family. In terms of processing, tyrosine phosphorylated by the members of the SRC family after exposure to a diverse array of extracellular stimuli.

Its subcellular location is the cytoplasm. The protein resides in the cytosol. The protein localises to the cytoskeleton. It localises to the membrane. It is found in the cell projection. Its subcellular location is the filopodium. The protein resides in the lamellipodium. The protein localises to the nucleus. It localises to the nucleus speckle. It catalyses the reaction a 1,2-diacyl-sn-glycero-3-phospho-(1D-myo-inositol-3,4,5-trisphosphate) + H2O = a 1,2-diacyl-sn-glycero-3-phospho-(1D-myo-inositol-3,4-bisphosphate) + phosphate. Its function is as follows. Phosphatidylinositol (PtdIns) phosphatase that specifically hydrolyzes the 5-phosphate of phosphatidylinositol-3,4,5-trisphosphate (PtdIns(3,4,5)P3) to produce PtdIns(3,4)P2, thereby negatively regulating the PI3K (phosphoinositide 3-kinase) pathways. Plays a central role in regulation of PI3K-dependent insulin signaling, although the precise molecular mechanisms and signaling pathways remain unclear. Part of a signaling pathway that regulates actin cytoskeleton remodeling. Required for the maintenance and dynamic remodeling of actin structures as well as in endocytosis, having a major impact on ligand-induced EGFR internalization and degradation. Participates in regulation of cortical and submembraneous actin. Regulates cell adhesion and cell spreading. Acts as a negative regulator of the FC-gamma-RIIA receptor (FCGR2A). Mediates signaling from the FC-gamma-RIIB receptor (FCGR2B), playing a central role in terminating signal transduction from activating immune/hematopoietic cell receptor systems. May also hydrolyze PtdIns(1,3,4,5)P4, and could thus affect the levels of the higher inositol polyphosphates like InsP6. This chain is Phosphatidylinositol 3,4,5-trisphosphate 5-phosphatase 2B (inppl1b), found in Danio rerio (Zebrafish).